The following is a 1154-amino-acid chain: MKRNIFIKLLISLLLLSSCTGDTCIDPDDFGFIKFNVSSRYNPEEITSRHEGDQVAPWRDSAYKVNGYPLTIMVRPWNYILGDKNTSGQLSAWCPWYGQKNNTTTLAPFCIKLQPCTFWDNTRLDMCTPNPENRNDAMISNPPCIMTDGVGLYFLIAAKNTDPNISPDSQRKPQGITRHLGELTSSVGYEFYSISSTGQLLKAGGINYQYNGEDKSKYAQSPLYFKIIDKFYDDNSGQYRLVIKSGVSDTRPDPLQFLTDLIKDVLFGKNGIIKKTYQQIVDTPGYRISVSAILTLYIMFTGLSFLIGNINLTHVELIIRIFKISIISILLSSDKAWTFFHDYLFVFFIDGVQQILQIINEAAATGPGSQSLLGLLISTQTLSKLFSLLFVDWLGFIYIILYLIALYFIFFLIFKATIIYLTALITIGMMIIMGPIFICFMLFNITRSLFENWLRQLISYALQPIILFAGIAFISMIIRTEIYSTLGFGVCKHDFPNLGPINEIFGSFLEDIDPSLSNSIFYWWFPVPMKGGINNFHKAKILVPNDHIVVDDSCKNNHDKCKHCAAYECIDERYIELPFLDLVKDSTRINNFINGKFVQLDGILLIFVSIYLLSKFNDTAISTAQFIAGTSGNLTDIQKVNQQSYESVSQQINRPLNYVAKTISTPVTSRISAGTAQANMFFAEKFENMMMRRLEKQALSSSANKVVQNEVKRKYGIDSKDVNMNAIKDYEDGISRLLNNLPKGNELKVKELSQMKFTQLRDKISANKYDVQDYTTLSTEQKTELDKLLKDANLRVLASDANFTKDYQEAYKHAHQEMSGRGIGLFGKNIGVLRSWQEMEHSINVKRKLKEEKRIGIGEKIYAGYTGIKRAALTTIVGKDLRDAYEGNLTSAEWHDFEYNDPRLRTYSEKLKDDEKAREREKLRMHINKETLAVQADILSPEYLVKLEKAGRKSDVEYYQELAQRQLIYDVHSKLFEEGEPVMMGDRFMREKATDSQMRDMIDNAHKKYVELIDVDRYTRRQEYYDIIYEKAKENLEQTYKEVQDHFKRDNISIEEMPALIAQKVKDTNAGSEIDKKITEELNNFNADVKNYEYSTAVLNKIEDRKQTITDVVNVQIDKINKYRENAKMEQYVKPILNEGRKLRTLEDHFKNMK.

An N-terminal signal peptide occupies residues 1 to 18; the sequence is MKRNIFIKLLISLLLLSS. Residue Cys-19 is the site of N-palmitoyl cysteine attachment. A lipid anchor (S-diacylglycerol cysteine) is attached at Cys-19. The next 4 helical transmembrane spans lie at 288-308, 394-414, 423-443, and 458-478; these read ISVS…FLIG, LGFI…FLIF, ALIT…FMLF, and ISYA…SMII.

This sequence belongs to the TrbL/VirB6 family.

It is found in the cell membrane. This is an uncharacterized protein from Rickettsia typhi (strain ATCC VR-144 / Wilmington).